The primary structure comprises 53 residues: Lupus La protein homolog (53 aa).

Positions 1–13 (GKVEFQGKKTKFD) are enriched in basic and acidic residues. The segment at 1–53 (GKVEFQGKKTKFDSDDERNENGAAGPVKRAREETDKEEPASKQQKTENGAGDQ) is disordered. Position 8 is an N6-acetyllysine (Lys8). Thr10 carries the post-translational modification Phosphothreonine. At Ser14 the chain carries Phosphoserine. Residues 29–40 (RAREETDKEEPA) are compositionally biased toward basic and acidic residues.

As to quaternary structure, interacts with DDX15. May interact with RUFY1. Phosphorylated.

The protein localises to the nucleus. Its function is as follows. Binds to the 3' poly(U) terminus of nascent RNA polymerase III transcripts, protecting them from exonuclease digestion and facilitating their folding and maturation. This chain is Lupus La protein homolog (SSB), found in Oryctolagus cuniculus (Rabbit).